Reading from the N-terminus, the 551-residue chain is Glucans biosynthesis protein D (551 aa).

The segment at residues 1 to 32 (MDRRRFIKGSMAMAAVCGTSGIASLFSQAAFA) is a signal peptide (tat-type signal).

The protein belongs to the OpgD/OpgG family. Predicted to be exported by the Tat system. The position of the signal peptide cleavage has not been experimentally proven.

The protein localises to the periplasm. The protein operates within glycan metabolism; osmoregulated periplasmic glucan (OPG) biosynthesis. In terms of biological role, probably involved in the control of the structural glucose backbone of osmoregulated periplasmic glucans (OPGs). This is Glucans biosynthesis protein D from Escherichia coli (strain K12 / MC4100 / BW2952).